Consider the following 508-residue polypeptide: Matrix metalloproteinase-19 (508 aa).

A signal peptide spans 1–18; that stretch reads MNCQQLWLGFLLPMTVSG. The propeptide occupies 19 to 97; that stretch reads RVLGLAEVAP…EDPFNQKTLK (79 aa). The Cysteine switch signature appears at 83–90; it reads PRCGLEDP. Zn(2+)-binding residues include Cys85 and His212. Glu213 is an active-site residue. Positions 216 and 222 each coordinate Zn(2+). A disordered region spans residues 262-288; the sequence is IRDEEEEETELPTVPPVPTEPSPMPDP. The span at 274-287 shows a compositional bias: pro residues; that stretch reads TVPPVPTEPSPMPD. 4 Hemopexin repeats span residues 286–333, 334–380, 381–425, and 426–472; these read PDPC…WEGL, PGNL…EPNL, DAAL…FTGV, and PNQP…WMHC. Cys289 and Cys472 are joined by a disulfide. Asn464 carries N-linked (GlcNAc...) asparagine glycosylation.

It belongs to the peptidase M10A family. Zn(2+) is required as a cofactor. The cofactor is Ca(2+). In terms of processing, activated by autolytic cleavage after Lys-97. Post-translationally, tyrosine phosphorylated by PKDCC/VLK. In terms of tissue distribution, expressed in mammary gland, placenta, lung, pancreas, ovary, small intestine, spleen, thymus, prostate, testis colon, heart and blood vessel walls. Not detected in brain and peripheral blood leukocytes. Also expressed in the synovial fluid of normal and rheumatoid patients.

Its subcellular location is the secreted. It localises to the extracellular space. The protein resides in the extracellular matrix. Its activity is regulated as follows. Strongly inhibited by TIMP-2, TIMP-3 and TIMP-4, while TIMP-1 is less efficient. Endopeptidase that degrades various components of the extracellular matrix, such as aggrecan and cartilage oligomeric matrix protein (comp), during development, haemostasis and pathological conditions (arthritic disease). May also play a role in neovascularization or angiogenesis. Hydrolyzes collagen type IV, laminin, nidogen, nascin-C isoform, fibronectin, and type I gelatin. This Homo sapiens (Human) protein is Matrix metalloproteinase-19 (MMP19).